The chain runs to 406 residues: Argininosuccinate synthase (406 aa).

Residues 11 to 19 (AYSGGLDTS) and Ala-38 each bind ATP. L-citrulline is bound by residues Tyr-91 and Ser-96. ATP is bound at residue Gly-121. 3 residues coordinate L-aspartate: Thr-123, Asn-127, and Asp-128. Asn-127 provides a ligand contact to L-citrulline. Residues Arg-131, Ser-181, Ser-190, Glu-266, and Tyr-278 each contribute to the L-citrulline site.

The protein belongs to the argininosuccinate synthase family. Type 1 subfamily. As to quaternary structure, homotetramer.

It localises to the cytoplasm. The catalysed reaction is L-citrulline + L-aspartate + ATP = 2-(N(omega)-L-arginino)succinate + AMP + diphosphate + H(+). It participates in amino-acid biosynthesis; L-arginine biosynthesis; L-arginine from L-ornithine and carbamoyl phosphate: step 2/3. In Campylobacter jejuni subsp. doylei (strain ATCC BAA-1458 / RM4099 / 269.97), this protein is Argininosuccinate synthase.